The chain runs to 387 residues: 3-ketoacyl-CoA thiolase (387 aa).

Cys-91 serves as the catalytic Acyl-thioester intermediate. Residues His-343 and Cys-373 each act as proton acceptor in the active site.

Belongs to the thiolase-like superfamily. Thiolase family. In terms of assembly, heterotetramer of two alpha chains (FadB) and two beta chains (FadA).

The protein localises to the cytoplasm. The enzyme catalyses an acyl-CoA + acetyl-CoA = a 3-oxoacyl-CoA + CoA. The protein operates within lipid metabolism; fatty acid beta-oxidation. In terms of biological role, catalyzes the final step of fatty acid oxidation in which acetyl-CoA is released and the CoA ester of a fatty acid two carbons shorter is formed. This is 3-ketoacyl-CoA thiolase from Salmonella paratyphi A (strain ATCC 9150 / SARB42).